Consider the following 395-residue polypeptide: S-adenosylmethionine synthase (395 aa).

Histidine 12 lines the ATP pocket. Aspartate 14 is a binding site for Mg(2+). Glutamate 40 lines the K(+) pocket. 2 residues coordinate L-methionine: glutamate 53 and glutamine 96. Positions 96 to 106 (QSKEIADAVNF) are flexible loop. ATP-binding positions include 174–176 (DGK), 242–243 (RF), aspartate 251, 257–258 (RK), alanine 274, and lysine 278. An L-methionine-binding site is contributed by aspartate 251. L-methionine is bound at residue lysine 282.

Belongs to the AdoMet synthase family. As to quaternary structure, homotetramer; dimer of dimers. Mg(2+) serves as cofactor. Requires K(+) as cofactor.

The protein localises to the cytoplasm. The enzyme catalyses L-methionine + ATP + H2O = S-adenosyl-L-methionine + phosphate + diphosphate. The protein operates within amino-acid biosynthesis; S-adenosyl-L-methionine biosynthesis; S-adenosyl-L-methionine from L-methionine: step 1/1. Its function is as follows. Catalyzes the formation of S-adenosylmethionine (AdoMet) from methionine and ATP. The overall synthetic reaction is composed of two sequential steps, AdoMet formation and the subsequent tripolyphosphate hydrolysis which occurs prior to release of AdoMet from the enzyme. This chain is S-adenosylmethionine synthase, found in Tropheryma whipplei (strain TW08/27) (Whipple's bacillus).